Reading from the N-terminus, the 347-residue chain is NADH-ubiquinone oxidoreductase chain 2 (347 aa).

10 helical membrane passes run 13 to 33 (IFTG…WVGL), 60 to 80 (FLTQ…NSML), 96 to 116 (LMIM…FWVP), 123 to 143 (PLMS…SIMY), 149 to 169 (LNVN…SWGG), 178 to 198 (ILAY…PYNP), 201 to 221 (TILN…LLNL), 247 to 267 (TLLS…WVII), 274 to 294 (NSLI…YFYL), and 326 to 346 (LPTL…MLMI).

Belongs to the complex I subunit 2 family. As to quaternary structure, core subunit of respiratory chain NADH dehydrogenase (Complex I) which is composed of 45 different subunits. Interacts with TMEM242.

Its subcellular location is the mitochondrion inner membrane. It catalyses the reaction a ubiquinone + NADH + 5 H(+)(in) = a ubiquinol + NAD(+) + 4 H(+)(out). In terms of biological role, core subunit of the mitochondrial membrane respiratory chain NADH dehydrogenase (Complex I) which catalyzes electron transfer from NADH through the respiratory chain, using ubiquinone as an electron acceptor. Essential for the catalytic activity and assembly of complex I. This chain is NADH-ubiquinone oxidoreductase chain 2, found in Pan troglodytes (Chimpanzee).